A 146-amino-acid chain; its full sequence is Hemoglobin subunit beta-1 (146 aa).

The Globin domain occupies 2–146; sequence EWTDQERATI…VVSALGKQYH (145 aa). Heme b is bound by residues His-63 and His-92.

It belongs to the globin family. As to quaternary structure, hb1 is a heterotetramer of two alpha-1 chains and two beta-1 chains. Hb2 is a heterotetramer of two alpha-2 chains and two beta-1 chains. HbC is a heterotetramer of two alpha-1 chains and two beta-2 chains. In terms of tissue distribution, red blood cells.

Involved in oxygen transport from gills to the various peripheral tissues. This chain is Hemoglobin subunit beta-1, found in Eleginops maclovinus (Patagonian blennie).